Reading from the N-terminus, the 490-residue chain is Katanin p60 ATPase-containing subunit A-like 1 (490 aa).

Met-1 carries the N-acetylmethionine modification. The interval Ser-87 to Asp-182 is disordered. Positions Ser-116 to Met-127 are enriched in basic and acidic residues. Residues Ala-128 to Ala-139 are compositionally biased toward low complexity. The segment covering Ser-143–Met-169 has biased composition (basic and acidic residues). Ser-174 is modified (phosphoserine). Gly-248–Thr-255 serves as a coordination point for ATP.

The protein belongs to the AAA ATPase family. Katanin p60 subunit A1 subfamily. A-like 1 sub-subfamily. Interacts with KATNB1 and KATNBL1.

The protein resides in the cytoplasm. Its subcellular location is the cytoskeleton. It localises to the spindle pole. The protein localises to the spindle. It carries out the reaction n ATP + n H2O + a microtubule = n ADP + n phosphate + (n+1) alpha/beta tubulin heterodimers.. Its function is as follows. Regulates microtubule dynamics in Sertoli cells, a process that is essential for spermiogenesis and male fertility. Severs microtubules in an ATP-dependent manner, promoting rapid reorganization of cellular microtubule arrays. Has microtubule-severing activity in vitro. The protein is Katanin p60 ATPase-containing subunit A-like 1 of Otolemur garnettii (Small-eared galago).